The chain runs to 173 residues: Alpha-crystallin A chain (173 aa).

The residue at position 1 (M1) is an N-acetylmethionine. Positions M1–E63 are required for complex formation with BFSP1 and BFSP2; during homooligomerization, mediates the association of 2 dimers to form a tetramer. Q6 bears the Deamidated glutamine; partial mark. S45 carries the phosphoserine modification. The residue at position 50 (Q50) is a Deamidated glutamine; partial. The region spanning L52–E164 is the sHSP domain. Residue K70 is modified to N6-acetyllysine. Residue Q90 is modified to Deamidated glutamine; partial. Residue K99 is modified to N6-acetyllysine. H100 is a binding site for Zn(2+). Deamidated asparagine; partial is present on N101. Positions 102 and 107 each coordinate Zn(2+). Phosphoserine is present on S122. N123 is modified (deamidated asparagine; partial). A disulfide bridge links C131 with C142. Q147 carries the deamidated glutamine; partial modification. H154 contributes to the Zn(2+) binding site. Residue S162 is glycosylated (O-linked (GlcNAc) serine).

Belongs to the small heat shock protein (HSP20) family. Heteropolymer composed of three CRYAA and one CRYAB subunits. Inter-subunit bridging via zinc ions enhances stability, which is crucial as there is no protein turn over in the lens. Can also form homodimers and homotetramers (dimers of dimers) which serve as the building blocks of homooligomers. Within homooligomers, the zinc-binding motif is created from residues of 3 different molecules. His-100 and Glu-102 from one molecule are ligands of the zinc ion, and His-107 and His-154 residues from additional molecules complete the site with tetrahedral coordination geometry. Part of a complex required for lens intermediate filament formation composed of BFSP1, BFSP2 and CRYAA. In terms of processing, O-glycosylated; contains N-acetylglucosamine side chains. Post-translationally, deamidation of Asn-101 in lens occurs mostly during the first 30 years of age, followed by a small additional amount of deamidation (approximately 5%) during the next approximately 38 years, resulting in a maximum of approximately 50% deamidation during the lifetime of the individual. Phosphorylation on Ser-122 seems to be developmentally regulated. Absent in the first months of life, it appears during the first 12 years of human lifetime. The relative amount of phosphorylated form versus unphosphorylated form does not change over the lifetime of the individual. In terms of processing, acetylation at Lys-70 may increase chaperone activity. Post-translationally, undergoes age-dependent proteolytical cleavage at the C-terminus. Alpha-crystallin A(1-172) is the most predominant form produced most rapidly during the first 12 years of age and after this age is present in approximately 50% of the lens molecules. In young individuals and during the first approximately 30 years of life, less than half molecules contain an intramolecular disulfide bond (oxidized form), while in the remaining fraction the cysteines are in the free sulfhydryl form (reduced form). With aging, the amount of oxidized form increases up to 90% and it becomes a major constituent of high molecular weight aggregates, concomitant with an age-dependent loss of its chaperone activity. The reduced form is undetectable in cataractous lenses. As to expression, expressed in the eye lens (at protein level).

The protein resides in the cytoplasm. It localises to the nucleus. Functionally, contributes to the transparency and refractive index of the lens. In its oxidized form (absence of intramolecular disulfide bond), acts as a chaperone, preventing aggregation of various proteins under a wide range of stress conditions. Required for the correct formation of lens intermediate filaments as part of a complex composed of BFSP1, BFSP2 and CRYAA. The polypeptide is Alpha-crystallin A chain (CRYAA) (Homo sapiens (Human)).